The sequence spans 370 residues: Histidinol-phosphate aminotransferase (370 aa).

Lys223 carries the post-translational modification N6-(pyridoxal phosphate)lysine.

The protein belongs to the class-II pyridoxal-phosphate-dependent aminotransferase family. Histidinol-phosphate aminotransferase subfamily. Homodimer. Requires pyridoxal 5'-phosphate as cofactor.

The catalysed reaction is L-histidinol phosphate + 2-oxoglutarate = 3-(imidazol-4-yl)-2-oxopropyl phosphate + L-glutamate. The protein operates within amino-acid biosynthesis; L-histidine biosynthesis; L-histidine from 5-phospho-alpha-D-ribose 1-diphosphate: step 7/9. This Methylobacterium nodulans (strain LMG 21967 / CNCM I-2342 / ORS 2060) protein is Histidinol-phosphate aminotransferase.